A 393-amino-acid chain; its full sequence is G protein-activated inward rectifier potassium channel 3 (393 aa).

Residues 1–23 are disordered; that stretch reads MAQENAAFSPGSEEPPRRRGRQR. The Cytoplasmic portion of the chain corresponds to 1 to 57; sequence MAQENAAFSPGSEEPPRRRGRQRYVEKDGRCNVQQGNVRETYRYLTDLFTTLVDLQW. Residues 58–82 traverse the membrane as a helical segment; that stretch reads RLSLLFFVLAYALTWLFFGAIWWLI. The Extracellular portion of the chain corresponds to 83–106; it reads AYGRGDLEHLEDTAWTPCVNNLNG. An intramembrane region (helical; Pore-forming) is located at residues 107–118; the sequence is FVAAFLFSIETE. An intramembrane region (pore-forming) is located at residues 119–125; that stretch reads TTIGYGH. The short motif at 120 to 125 is the Selectivity filter element; it reads TIGYGH. Residues 126–134 are Extracellular-facing; that stretch reads RVITDQCPE. The chain crosses the membrane as a helical span at residues 135–156; the sequence is GIVLLLLQAILGSMVNAFMVGC. At 157–393 the chain is on the cytoplasmic side; that stretch reads MFVKISQPNK…LPPPESESKV (237 aa). Positions 360–393 are disordered; that stretch reads KVEEEGAGEGAGAGDGADKEHNGCLPPPESESKV. The span at 384–393 shows a compositional bias: pro residues; that stretch reads LPPPESESKV. Residues 390–393 carry the PDZ-binding motif; that stretch reads ESKV.

It belongs to the inward rectifier-type potassium channel (TC 1.A.2.1) family. KCNJ9 subfamily. Associates with KCNJ3/GIRK1 to form a G-protein-activated heteromultimer pore-forming unit. Interacts (via PDZ-binding motif) with SNX27 (via PDZ domain); the interaction is required when endocytosed to prevent degradation in lysosomes and promote recycling to the plasma membrane. As to expression, expressed mainly in the brain, some expression in the skeletal muscle.

It localises to the membrane. The catalysed reaction is K(+)(in) = K(+)(out). Inward rectifier potassium channels are characterized by a greater tendency to allow potassium to flow into the cell rather than out of it. Their voltage dependence is regulated by the concentration of extracellular potassium; as external potassium is raised, the voltage range of the channel opening shifts to more positive voltages. The inward rectification is mainly due to the blockage of outward current by internal magnesium. This receptor is controlled by G proteins. Unable to produce channel activity when expressed alone. Forms a functional channel in association with KCNJ3/GIRK1. The polypeptide is G protein-activated inward rectifier potassium channel 3 (Kcnj9) (Mus musculus (Mouse)).